We begin with the raw amino-acid sequence, 509 residues long: Protein WHAT'S THIS FACTOR 1 homolog, chloroplastic (509 aa).

The transit peptide at 1 to 56 directs the protein to the chloroplast; sequence MDAKLLLLPFPSPPATLHHHPPPPKSLFLGASLPLLHPPPPLRLLRPGAPRRLAVV. The PORR domain maps to 65–393; the sequence is KEIPFDNVIQ…LKEKMRALVA (329 aa). Disordered stretches follow at residues 402–431 and 444–509; these read VPAT…DEDE and SGGK…RERW. Acidic residues predominate over residues 461–474; it reads ENDDSPPDFEDDDG.

The protein localises to the plastid. It is found in the chloroplast. Functionally, RNA-binding protein involved in group II intron splicing. Binds specific group II introns and promotes their splicing. Functions in the context of a heterodimer with the ribonuclease III domain-containing protein RNC1. The sequence is that of Protein WHAT'S THIS FACTOR 1 homolog, chloroplastic from Oryza sativa subsp. japonica (Rice).